Reading from the N-terminus, the 192-residue chain is Ribonuclease HII (192 aa).

Residues 2–187 enclose the RNase H type-2 domain; it reads KNLCGIDEAG…KALGENEIGV (186 aa). A divalent metal cation contacts are provided by aspartate 8, glutamate 9, and aspartate 97.

This sequence belongs to the RNase HII family. It depends on Mn(2+) as a cofactor. Requires Mg(2+) as cofactor.

The protein localises to the cytoplasm. It carries out the reaction Endonucleolytic cleavage to 5'-phosphomonoester.. Endonuclease that specifically degrades the RNA of RNA-DNA hybrids. This is Ribonuclease HII from Aliarcobacter butzleri (strain RM4018) (Arcobacter butzleri).